Here is a 386-residue protein sequence, read N- to C-terminus: Queuine tRNA-ribosyltransferase (386 aa).

Asp-99 (proton acceptor) is an active-site residue. Substrate-binding positions include 99 to 103 (DSGGF), Asp-153, Gln-198, and Gly-225. The segment at 256–262 (GVGKPED) is RNA binding. Asp-275 serves as the catalytic Nucleophile. Residues 280 to 284 (TRNAR) form an RNA binding; important for wobble base 34 recognition region. Positions 313, 315, 318, and 344 each coordinate Zn(2+).

The protein belongs to the queuine tRNA-ribosyltransferase family. As to quaternary structure, homodimer. Within each dimer, one monomer is responsible for RNA recognition and catalysis, while the other monomer binds to the replacement base PreQ1. Zn(2+) serves as cofactor.

The catalysed reaction is 7-aminomethyl-7-carbaguanine + guanosine(34) in tRNA = 7-aminomethyl-7-carbaguanosine(34) in tRNA + guanine. The protein operates within tRNA modification; tRNA-queuosine biosynthesis. In terms of biological role, catalyzes the base-exchange of a guanine (G) residue with the queuine precursor 7-aminomethyl-7-deazaguanine (PreQ1) at position 34 (anticodon wobble position) in tRNAs with GU(N) anticodons (tRNA-Asp, -Asn, -His and -Tyr). Catalysis occurs through a double-displacement mechanism. The nucleophile active site attacks the C1' of nucleotide 34 to detach the guanine base from the RNA, forming a covalent enzyme-RNA intermediate. The proton acceptor active site deprotonates the incoming PreQ1, allowing a nucleophilic attack on the C1' of the ribose to form the product. After dissociation, two additional enzymatic reactions on the tRNA convert PreQ1 to queuine (Q), resulting in the hypermodified nucleoside queuosine (7-(((4,5-cis-dihydroxy-2-cyclopenten-1-yl)amino)methyl)-7-deazaguanosine). The chain is Queuine tRNA-ribosyltransferase from Acinetobacter baylyi (strain ATCC 33305 / BD413 / ADP1).